A 717-amino-acid chain; its full sequence is Ribosomal RNA large subunit methyltransferase K/L (717 aa).

Residues 44–155 form the THUMP domain; it reads DAYKVCIYSY…KQFVNVFLCL (112 aa).

Belongs to the methyltransferase superfamily. RlmKL family.

The protein localises to the cytoplasm. The enzyme catalyses guanosine(2445) in 23S rRNA + S-adenosyl-L-methionine = N(2)-methylguanosine(2445) in 23S rRNA + S-adenosyl-L-homocysteine + H(+). It carries out the reaction guanosine(2069) in 23S rRNA + S-adenosyl-L-methionine = N(2)-methylguanosine(2069) in 23S rRNA + S-adenosyl-L-homocysteine + H(+). In terms of biological role, specifically methylates the guanine in position 2445 (m2G2445) and the guanine in position 2069 (m7G2069) of 23S rRNA. In Francisella tularensis subsp. holarctica (strain FTNF002-00 / FTA), this protein is Ribosomal RNA large subunit methyltransferase K/L.